We begin with the raw amino-acid sequence, 122 residues long: Small ribosomal subunit protein uS13 (122 aa).

A disordered region spans residues 95–122 (GLPVRGQRTRTNARTRKGPRKTVAKKKK).

It belongs to the universal ribosomal protein uS13 family. In terms of assembly, part of the 30S ribosomal subunit. Forms a loose heterodimer with protein S19. Forms two bridges to the 50S subunit in the 70S ribosome.

Located at the top of the head of the 30S subunit, it contacts several helices of the 16S rRNA. In the 70S ribosome it contacts the 23S rRNA (bridge B1a) and protein L5 of the 50S subunit (bridge B1b), connecting the 2 subunits; these bridges are implicated in subunit movement. Contacts the tRNAs in the A and P-sites. The chain is Small ribosomal subunit protein uS13 from Thermoanaerobacter pseudethanolicus (strain ATCC 33223 / 39E) (Clostridium thermohydrosulfuricum).